The chain runs to 396 residues: Elongation factor Tu (396 aa).

A tr-type G domain is found at 10–205; sequence KTHANIGTIG…AVDDYIPTPE (196 aa). The interval 19–26 is G1; sequence GHVDHGKT. 19–26 contributes to the GTP binding site; that stretch reads GHVDHGKT. Thr-26 contacts Mg(2+). The interval 61–65 is G2; sequence GITIS. Residues 82–85 are G3; sequence DCPG. GTP is bound by residues 82–86 and 137–140; these read DCPGH and NKCD. Residues 137–140 are G4; the sequence is NKCD. Positions 175–177 are G5; sequence SAL.

This sequence belongs to the TRAFAC class translation factor GTPase superfamily. Classic translation factor GTPase family. EF-Tu/EF-1A subfamily. Monomer.

The protein resides in the cytoplasm. The enzyme catalyses GTP + H2O = GDP + phosphate + H(+). Its function is as follows. GTP hydrolase that promotes the GTP-dependent binding of aminoacyl-tRNA to the A-site of ribosomes during protein biosynthesis. This is Elongation factor Tu from Halalkalibacterium halodurans (strain ATCC BAA-125 / DSM 18197 / FERM 7344 / JCM 9153 / C-125) (Bacillus halodurans).